Reading from the N-terminus, the 233-residue chain is Phosphoenolpyruvate guanylyltransferase 1 (233 aa).

Thr-154, Gly-171, and Ser-174 together coordinate phosphoenolpyruvate.

This sequence belongs to the CofC family.

The enzyme catalyses phosphoenolpyruvate + GTP + H(+) = enolpyruvoyl-2-diphospho-5'-guanosine + diphosphate. It functions in the pathway cofactor biosynthesis; coenzyme F420 biosynthesis. In terms of biological role, guanylyltransferase that catalyzes the activation of phosphoenolpyruvate (PEP) as enolpyruvoyl-2-diphospho-5'-guanosine, via the condensation of PEP with GTP. It is involved in the biosynthesis of coenzyme F420, a hydride carrier cofactor. This Rhodococcus jostii (strain RHA1) protein is Phosphoenolpyruvate guanylyltransferase 1.